The sequence spans 1566 residues: Arginine-glutamic acid dipeptide repeats protein (1566 aa).

Over residues 1-36 (MTADKDKDKDKEKDRDRDRDREREKRDKARESENSR) the composition is skewed to basic and acidic residues. A disordered region spans residues 1 to 90 (MTADKDKDKD…KKKSRYERTD (90 aa)). Residues S53 and S56 each carry the phosphoserine modification. Residues 74 to 85 (KNKKKPPKKKSR) are compositionally biased toward basic residues. The 181-residue stretch at 103–283 (VVYRPGDCVY…PETRRLNSTQ (181 aa)) folds into the BAH domain. T120 carries the post-translational modification Phosphothreonine. S142 and S304 each carry phosphoserine. One can recognise an ELM2 domain in the interval 284–387 (GEIRVGPSHQ…KALQRLVKKP (104 aa)). An SANT domain is found at 391-443 (LIEKCWTEDEVKRFVKGLRQYGKNFFRIRKELLPNKETGELITFYYYWKKTPE). The interval 464-495 (TRTASTPVNTPSRPPSSEFLDLSSASEDDFDS) is disordered. The span at 465 to 474 (RTASTPVNTP) shows a compositional bias: polar residues. Residues 479–488 (SSEFLDLSSA) show a composition bias toward low complexity. A GATA-type zinc finger spans residues 507–532 (CRHCFTTTSKDWHHGGRENILLCTDC). The interval 542–1133 (LPPIEKPVDP…PSHASQSARF (592 aa)) is disordered. K560 participates in a covalent cross-link: Glycyl lysine isopeptide (Lys-Gly) (interchain with G-Cter in SUMO2). 3 positions are modified to phosphoserine: S594, S600, and S613. Residues 609–623 (SGRNSPSAASTSSND) show a composition bias toward low complexity. Basic and acidic residues predominate over residues 624–640 (SKAETVKKSAKKVKEEA). Residue K637 forms a Glycyl lysine isopeptide (Lys-Gly) (interchain with G-Cter in SUMO2) linkage. Phosphoserine occurs at positions 642, 656, 675, and 679. The span at 652-673 (EKVASDTEEADRTSSKKTKTQE) shows a compositional bias: basic and acidic residues. Residues 688–708 (SDSRSVNDEGSSDPKDIDQDN) show a composition bias toward basic and acidic residues. Positions 709–720 (RSTSPSIPSPQD) are enriched in polar residues. A compositionally biased stretch (low complexity) spans 726–751 (DSSAQQQMLQAQPPALQAPTGVTPAP). The segment covering 752–767 (SSAPPGTPQLPTPGPT) has biased composition (pro residues). The segment covering 778-796 (SPTASQAPNQPQAPTAPVP) has biased composition (low complexity). The span at 809-827 (QRPPSPHPPPHPSPHPPLQ) shows a compositional bias: pro residues. Residues 829-840 (LTGSAGQPSAPS) show a composition bias toward polar residues. Composition is skewed to low complexity over residues 843–865 (QPPLHGQGPPGPHSLQAGPLLQH) and 897–913 (SLQLPASQSALQSQQPP). Residues 914 to 940 (REQPLPPAPLAMPHIKPPPTTPIPQLP) show a composition bias toward pro residues. The segment covering 970–980 (KPLSSLSTHHP) has biased composition (low complexity). A compositionally biased stretch (pro residues) spans 1030–1052 (PQPPFAQHPFVPGGPPPITPPTC). Over residues 1053-1085 (PSTSTPPAGPGTSAQPPCSGAAASGGSIAGGSS) the composition is skewed to low complexity. Phosphoserine is present on residues S1106, S1113, and S1115. Pro residues predominate over residues 1106–1117 (SPPPPPRSPSPE). Phosphothreonine is present on T1119. Residues 1156–1211 (GSKLAKKREEAIEKAKREAEQKAREEREREKEKEKEREREREREREAERAAKASSS) adopt a coiled-coil conformation. K1158 is subject to N6-acetyllysine. Basic and acidic residues predominate over residues 1162 to 1206 (KREEAIEKAKREAEQKAREEREREKEKEKEREREREREREAERAA). Residues 1162-1246 (KREEAIEKAK…TTIAAVPPYI (85 aa)) form a disordered region. Y1259 carries the post-translational modification Phosphotyrosine. Residue S1266 is modified to Phosphoserine.

In terms of assembly, interacts with HDAC1. Interacts with ATN1. Interaction with ATN1 is improved when the poly-Gln region of ATN1 is extended. Interacts with FAT1. As to expression, widely expressed. Expressed in tumor cell lines.

Its subcellular location is the nucleus. In terms of biological role, plays a role as a transcriptional repressor during development. May play a role in the control of cell survival. Overexpression of RERE recruits BAX to the nucleus particularly to POD and triggers caspase-3 activation, leading to cell death. The polypeptide is Arginine-glutamic acid dipeptide repeats protein (RERE) (Homo sapiens (Human)).